A 351-amino-acid chain; its full sequence is Alcohol dehydrogenase 5 (351 aa).

Zn(2+)-binding residues include C47, H70, C101, C104, C107, C115, and C183. NAD(+) contacts are provided by residues G181–G187, D205, K210, V272–M274, and R344.

This sequence belongs to the zinc-containing alcohol dehydrogenase family. Zn(2+) is required as a cofactor.

The enzyme catalyses a primary alcohol + NAD(+) = an aldehyde + NADH + H(+). It carries out the reaction a secondary alcohol + NAD(+) = a ketone + NADH + H(+). This is Alcohol dehydrogenase 5 (ADH5) from Saccharomyces pastorianus (Lager yeast).